The following is a 246-amino-acid chain: Small ribosomal subunit protein uS3 (246 aa).

The 69-residue stretch at 38 to 106 (IRQYLNARLA…DVQINIYEIR (69 aa)) folds into the KH type-2 domain. The interval 218 to 246 (VAKNQSRRPNAQGGNNRGGDRNRRRKGNR) is disordered.

The protein belongs to the universal ribosomal protein uS3 family. Part of the 30S ribosomal subunit. Forms a tight complex with proteins S10 and S14.

Functionally, binds the lower part of the 30S subunit head. Binds mRNA in the 70S ribosome, positioning it for translation. The polypeptide is Small ribosomal subunit protein uS3 (Porphyromonas gingivalis (strain ATCC 33277 / DSM 20709 / CIP 103683 / JCM 12257 / NCTC 11834 / 2561)).